The primary structure comprises 64 residues: U-scoloptoxin(14)-Er1a (64 aa).

The N-terminal stretch at 1-23 (MRPSFPLLLIMLLVCTAHHMVSG) is a signal peptide.

Belongs to the scoloptoxin-14 family. Post-translationally, contains 4 disulfide bonds. In terms of tissue distribution, expressed by the venom gland.

It is found in the secreted. This is U-scoloptoxin(14)-Er1a from Ethmostigmus rubripes (Giant centipede).